Here is a 469-residue protein sequence, read N- to C-terminus: UDP-N-acetylmuramate--L-alanine ligase (469 aa).

Position 113–119 (113–119 (GTHGKTT)) interacts with ATP.

This sequence belongs to the MurCDEF family.

The protein resides in the cytoplasm. The catalysed reaction is UDP-N-acetyl-alpha-D-muramate + L-alanine + ATP = UDP-N-acetyl-alpha-D-muramoyl-L-alanine + ADP + phosphate + H(+). Its pathway is cell wall biogenesis; peptidoglycan biosynthesis. Its function is as follows. Cell wall formation. This Neisseria meningitidis serogroup A / serotype 4A (strain DSM 15465 / Z2491) protein is UDP-N-acetylmuramate--L-alanine ligase.